A 673-amino-acid polypeptide reads, in one-letter code: UvrABC system protein B (673 aa).

The 388-residue stretch at 30–417 (NSILLGNKYQ…SSVVVDQIIR (388 aa)) folds into the Helicase ATP-binding domain. Position 43–50 (43–50 (GVTGSGKT)) interacts with ATP. The Beta-hairpin motif lies at 96 to 119 (YYDYYQPESYVPSKDLFIEKEATI). A Helicase C-terminal domain is found at 434-600 (QMEDLYSEIQ…TIVKKIQNIL (167 aa)). The UVR domain occupies 627–662 (KKLIDKLKFDLEEAVNDERFEDAIVLRDKIKELSSK).

Belongs to the UvrB family. As to quaternary structure, forms a heterotetramer with UvrA during the search for lesions. Interacts with UvrC in an incision complex.

The protein localises to the cytoplasm. The UvrABC repair system catalyzes the recognition and processing of DNA lesions. A damage recognition complex composed of 2 UvrA and 2 UvrB subunits scans DNA for abnormalities. Upon binding of the UvrA(2)B(2) complex to a putative damaged site, the DNA wraps around one UvrB monomer. DNA wrap is dependent on ATP binding by UvrB and probably causes local melting of the DNA helix, facilitating insertion of UvrB beta-hairpin between the DNA strands. Then UvrB probes one DNA strand for the presence of a lesion. If a lesion is found the UvrA subunits dissociate and the UvrB-DNA preincision complex is formed. This complex is subsequently bound by UvrC and the second UvrB is released. If no lesion is found, the DNA wraps around the other UvrB subunit that will check the other stand for damage. The polypeptide is UvrABC system protein B (Borreliella burgdorferi (strain ATCC 35210 / DSM 4680 / CIP 102532 / B31) (Borrelia burgdorferi)).